The chain runs to 310 residues: Beta-ketoacyl-[acyl-carrier-protein] synthase III (310 aa).

Catalysis depends on residues Cys-112 and His-235. The segment at 236 to 240 is ACP-binding; the sequence is QANIR. The active site involves Asn-265.

Belongs to the thiolase-like superfamily. FabH family. Homodimer.

It localises to the cytoplasm. The enzyme catalyses malonyl-[ACP] + acetyl-CoA + H(+) = 3-oxobutanoyl-[ACP] + CO2 + CoA. The protein operates within lipid metabolism; fatty acid biosynthesis. Catalyzes the condensation reaction of fatty acid synthesis by the addition to an acyl acceptor of two carbons from malonyl-ACP. Catalyzes the first condensation reaction which initiates fatty acid synthesis and may therefore play a role in governing the total rate of fatty acid production. Possesses both acetoacetyl-ACP synthase and acetyl transacylase activities. Its substrate specificity determines the biosynthesis of branched-chain and/or straight-chain of fatty acids. This is Beta-ketoacyl-[acyl-carrier-protein] synthase III from Geobacillus kaustophilus (strain HTA426).